A 328-amino-acid polypeptide reads, in one-letter code: Tryptophan--tRNA ligase (328 aa).

ATP-binding positions include 10-12 and 18-19; these read QAT and GN. Residues 11–19 carry the 'HIGH' region motif; the sequence is ATGSLHLGN. Asp134 contributes to the L-tryptophan binding site. ATP is bound by residues 146–148, Ile186, and 195–199; these read GED and KMSKS. Residues 195–199 carry the 'KMSKS' region motif; that stretch reads KMSKS.

The protein belongs to the class-I aminoacyl-tRNA synthetase family. Homodimer.

The protein localises to the cytoplasm. The enzyme catalyses tRNA(Trp) + L-tryptophan + ATP = L-tryptophyl-tRNA(Trp) + AMP + diphosphate + H(+). Its function is as follows. Catalyzes the attachment of tryptophan to tRNA(Trp). This Rickettsia bellii (strain RML369-C) protein is Tryptophan--tRNA ligase.